We begin with the raw amino-acid sequence, 407 residues long: Serine/threonine transporter SstT (407 aa).

9 helical membrane-spanning segments follow: residues Ile-11–Ala-31, Phe-43–Leu-63, Ile-82–Phe-102, Ala-141–Leu-161, Leu-192–Gly-212, Leu-216–Val-236, Met-298–Val-318, Ala-339–Ile-359, and Ile-363–Thr-383.

This sequence belongs to the dicarboxylate/amino acid:cation symporter (DAACS) (TC 2.A.23) family.

The protein localises to the cell inner membrane. The catalysed reaction is L-serine(in) + Na(+)(in) = L-serine(out) + Na(+)(out). It catalyses the reaction L-threonine(in) + Na(+)(in) = L-threonine(out) + Na(+)(out). Its function is as follows. Involved in the import of serine and threonine into the cell, with the concomitant import of sodium (symport system). This Shewanella denitrificans (strain OS217 / ATCC BAA-1090 / DSM 15013) protein is Serine/threonine transporter SstT.